A 230-amino-acid chain; its full sequence is Demethylmenaquinone methyltransferase (230 aa).

S-adenosyl-L-methionine contacts are provided by residues Thr-57, Asp-77, 101-102, and Ser-118; that span reads DI.

This sequence belongs to the class I-like SAM-binding methyltransferase superfamily. MenG/UbiE family.

It catalyses the reaction a 2-demethylmenaquinol + S-adenosyl-L-methionine = a menaquinol + S-adenosyl-L-homocysteine + H(+). The protein operates within quinol/quinone metabolism; menaquinone biosynthesis; menaquinol from 1,4-dihydroxy-2-naphthoate: step 2/2. Functionally, methyltransferase required for the conversion of demethylmenaquinol (DMKH2) to menaquinol (MKH2). The chain is Demethylmenaquinone methyltransferase from Chlamydia caviae (strain ATCC VR-813 / DSM 19441 / 03DC25 / GPIC) (Chlamydophila caviae).